We begin with the raw amino-acid sequence, 1041 residues long: Pre-mRNA-splicing factor ATP-dependent RNA helicase DHX16 (1041 aa).

Disordered regions lie at residues 101 to 207 and 371 to 391; these read EDSE…AYEE and LQGDEEPSAPPTSTQAQQKES. S103, S106, and S107 each carry phosphoserine. Over residues 119–130 the composition is skewed to basic residues; the sequence is QKKRKKRKHLRK. A Phosphoserine modification is found at S160. Residues 166–207 show a composition bias toward basic and acidic residues; sequence RTERERLQDLEERDAFAERVRQRDKDRTRNVLERSDKKAYEE. Residues 381–391 show a composition bias toward polar residues; sequence PTSTQAQQKES. A Helicase ATP-binding domain is found at 409–573; it reads LAAIANHQVL…FDDAPVFRIP (165 aa). 422 to 429 contacts ATP; it reads GETGSGKT. A DEAH box motif is present at residues 520-523; sequence DEAH. In terms of domain architecture, Helicase C-terminal spans 598-771; the sequence is SVLQIHVTQP…NVVLLLKSLG (174 aa). T712 bears the Phosphothreonine mark.

It belongs to the DEAD box helicase family. DEAH subfamily. DDX16/PRP8 sub-subfamily. As to quaternary structure, component of pre-catalytic spliceosome complexes. Component of the minor spliceosome, which splices U12-type introns. Interacts with GPKOW. Interacts with TRIM6. Interacts with RIGI. As to expression, expressed in the spleen, thyroid and testis. Also expressed in the brain and cerebellum.

It is found in the nucleus. Its subcellular location is the nucleoplasm. It localises to the cytoplasm. It catalyses the reaction ATP + H2O = ADP + phosphate + H(+). Required for pre-mRNA splicing as a component of the spliceosome. Contributes to pre-mRNA splicing after spliceosome formation and prior to the first transesterification reaction. As a component of the minor spliceosome, involved in the splicing of U12-type introns in pre-mRNAs. Also plays a role in innate antiviral response by acting as a pattern recognition receptor sensing splicing signals in viral RNA. Mechanistically, TRIM6 promotes the interaction between unanchored 'Lys-48'-polyubiquitin chains and DHX16, leading to DHX16 interaction with RIGI and ssRNA to amplify RIGI-dependent innate antiviral immune responses. This Homo sapiens (Human) protein is Pre-mRNA-splicing factor ATP-dependent RNA helicase DHX16 (DHX16).